The following is a 149-amino-acid chain: UPF0336 protein CMM_2793 (149 aa).

Positions 16 to 117 constitute a MaoC-like domain; sequence APYLVGREKV…TVTKVATLGG (102 aa).

Belongs to the UPF0336 family.

The chain is UPF0336 protein CMM_2793 from Clavibacter michiganensis subsp. michiganensis (strain NCPPB 382).